Here is a 66-residue protein sequence, read N- to C-terminus: Large ribosomal subunit protein bL33c (66 aa).

This sequence belongs to the bacterial ribosomal protein bL33 family.

The protein resides in the plastid. The protein localises to the chloroplast. The chain is Large ribosomal subunit protein bL33c from Cryptomeria japonica (Japanese cedar).